A 630-amino-acid polypeptide reads, in one-letter code: Cyclin-T1-2 (630 aa).

Residues 288–297 are compositionally biased toward low complexity; sequence QSSLSVSSSS. Disordered regions lie at residues 288 to 313 and 410 to 439; these read QSSLSVSSSSPEIGDPNDHLQVDSSQ and RSGDKTKLCSEGGSSLTDVDSKSTQSVEPP. Residues 421–439 are compositionally biased toward polar residues; the sequence is GGSSLTDVDSKSTQSVEPP.

The protein belongs to the cyclin family. Cyclin T subfamily.

This chain is Cyclin-T1-2 (CYCT1_2), found in Oryza sativa subsp. japonica (Rice).